Consider the following 332-residue polypeptide: Eukaryotic translation initiation factor 3 subunit H (332 aa).

Residues 18-153 form the MPN domain; it reads VQVDGLTVLK…LKAFRLSDEM (136 aa). The segment at 251–285 is disordered; sequence QQQKENYLQRRQQENQSRIQRGEDPLPDEDLSKMF.

It belongs to the eIF-3 subunit H family. As to quaternary structure, component of the eukaryotic translation initiation factor 3 (eIF-3) complex.

The protein resides in the cytoplasm. Functionally, component of the eukaryotic translation initiation factor 3 (eIF-3) complex, which is involved in protein synthesis of a specialized repertoire of mRNAs and, together with other initiation factors, stimulates binding of mRNA and methionyl-tRNAi to the 40S ribosome. The eIF-3 complex specifically targets and initiates translation of a subset of mRNAs involved in cell proliferation. The protein is Eukaryotic translation initiation factor 3 subunit H of Nematostella vectensis (Starlet sea anemone).